A 1137-amino-acid polypeptide reads, in one-letter code: Dendrite extension defective protein 1 (1137 aa).

The signal sequence occupies residues 1–41; it reads MLAHTHRINKCLYGQNQMRNRHALLGALPPIFLLLLPLISC. Topologically, residues 43 to 1005 are extracellular; sequence KFDPERIAAR…HAEEQSPRLA (963 aa). The region spanning 163 to 302 is the NIDO 1 domain; the sequence is PFWNRNDLRN…GEWMFELSEL (140 aa). Residues Asn-240 and Asn-416 are each glycosylated (N-linked (GlcNAc...) asparagine). The region spanning 409-450 is the EGF-like; calcium-binding domain; that stretch reads DVDECKTNSTICHKNAICTNTPGRYFCMCKEGFSGDGQNDCS. Cystine bridges form between Cys-413-Cys-426, Cys-420-Cys-435, and Cys-437-Cys-449. The NIDO 2 domain occupies 519–659; the sequence is PFFGPIDLSR…GTWLYRIDKA (141 aa). N-linked (GlcNAc...) asparagine glycosylation occurs at Asn-571. Residues 738-749 are compositionally biased toward polar residues; sequence IGNQQRQQTTKA. Disordered stretches follow at residues 738 to 765, 795 to 856, 878 to 897, 906 to 933, and 978 to 998; these read IGNQ…HRPI, FRPN…PFEA, QTTK…EDLS, TEED…TKAH, and NSQP…GHAE. N-linked (GlcNAc...) asparagine glycosylation is present at Asn-756. Positions 798 to 809 are enriched in polar residues; that stretch reads NQRNGVQKSTQR. Residues 819 to 833 show a composition bias toward basic and acidic residues; that stretch reads PLKEEATTSVPREKT. Acidic residues predominate over residues 906-915; sequence TEEDEEEAEI. Positions 916-933 are enriched in low complexity; sequence STETTTEMSSTTTTTKAH. Residues 978–992 show a composition bias toward polar residues; the sequence is NSQPPKQRNDNQPTV. Residues 1006–1026 form a helical membrane-spanning segment; sequence ILLPVMIILAWLVILVCIGAV. At 1027–1037 the chain is on the cytoplasmic side; it reads VCCKRRNSRES. Positions 1106 to 1125 are disordered; it reads ARLSTQERQSPPSFVNNGYT.

Post-translationally, may be proteolytically cleaved and secreted.

It localises to the membrane. The protein localises to the cell projection. Its subcellular location is the dendrite. It is found in the secreted. In terms of biological role, along with dyf-7, enables neurite growth and maintenance by anchoring amphid dendritic tips during neuron cell body migration in embryonic and larval development. Promotes seam cell remodeling during the dauer phase. Plays a role in positively regulating locomotion during the dauer phase. In Caenorhabditis elegans, this protein is Dendrite extension defective protein 1.